Here is a 238-residue protein sequence, read N- to C-terminus: Large ribosomal subunit protein uL1 (238 aa).

A disordered region spans residues 217 to 238 (TNGPGVPVDETIQKNYADDAEA).

This sequence belongs to the universal ribosomal protein uL1 family. In terms of assembly, part of the 50S ribosomal subunit.

In terms of biological role, binds directly to 23S rRNA. The L1 stalk is quite mobile in the ribosome, and is involved in E site tRNA release. Protein L1 is also a translational repressor protein, it controls the translation of the L11 operon by binding to its mRNA. The polypeptide is Large ribosomal subunit protein uL1 (Corynebacterium urealyticum (strain ATCC 43042 / DSM 7109)).